A 142-amino-acid polypeptide reads, in one-letter code: Relaxin-3 (142 aa).

Residues 1–25 form the signal peptide; it reads MARYKLLLLLAVWVLTGELWPGAEA. 3 disulfides stabilise this stretch: Cys-35–Cys-129, Cys-47–Cys-142, and Cys-128–Cys-133. Residues 55 to 118 constitute a propeptide, connecting peptide; sequence SDILAHEAMG…GTPGALRGSR (64 aa).

The protein belongs to the insulin family. As to quaternary structure, heterodimer of a B chain and an A chain linked by two disulfide bonds.

It localises to the secreted. Its function is as follows. May play a role in neuropeptide signaling processes. Ligand for LGR7, RXFP3 and RXFP4. In Pan troglodytes (Chimpanzee), this protein is Relaxin-3 (RLN3).